Consider the following 1187-residue polypeptide: Roquin-2 (1187 aa).

The Zn(2+) site is built by cysteine 14, cysteine 17, cysteine 33, histidine 35, cysteine 38, cysteine 50, and aspartate 53. Residues 14–54 (CPICYNEFDENVHKPISLGCSHTVCKTCLNKLHRKACPFDQ) form an RING-type; degenerate zinc finger. Residues 91–170 (ENKHYEVAKK…RTVTELILQH (80 aa)) are HEPN-N. Positions 171 to 325 (QNPQQLSANL…SIIDKLQSPE (155 aa)) are ROQ. An HEPN-C region spans residues 326–396 (SFAKSVQELT…GLVDFIQNYS (71 aa)). The segment at 410 to 438 (KYKTSMCRDLRQQGGCPRGTNCTFAHSQE) adopts a C3H1-type zinc-finger fold. Disordered regions lie at residues 527 to 571 (VGTN…GTEL) and 640 to 677 (NVPE…PPPQ). Positions 529–545 (TNAQNAGPSAESVSENK) are enriched in polar residues. A Phosphoserine modification is found at serine 548. Residues 553–571 (PVSNAAATSAGPSNFGTEL) show a composition bias toward polar residues. 3 positions are modified to phosphoserine: serine 806, serine 981, and serine 1115.

As to quaternary structure, interacts with EDC4. Interacts with CCR4-NOT deadenylase complex. Interacts with MAP3K5; the interaction is probably stimulus-dependent. Proteolytically cleaved by MALT1 in activated CD4(+) T cells; cleavage at Arg-509 is critical for promoting RC3H1 degradation in response to T-cell receptor (TCR) stimulation, and hence is necessary for prolonging the stability of a set of mRNAs controlling Th17 cell differentiation. Highest levels in lymph node and thymus and slightly lesser amounts in brain, lung, and spleen (at protein level). Very weak expression in heart, muscle, and kidney (at protein level). Expressed in CD4(+) helper T-cells (at protein level).

The protein resides in the cytoplasm. Its subcellular location is the P-body. It carries out the reaction S-ubiquitinyl-[E2 ubiquitin-conjugating enzyme]-L-cysteine + [acceptor protein]-L-lysine = [E2 ubiquitin-conjugating enzyme]-L-cysteine + N(6)-ubiquitinyl-[acceptor protein]-L-lysine.. Its pathway is protein modification; protein ubiquitination. Binding to dsRNA, but not CDE RNA, crosstalks with the E3 ubiquitin ligase activity and may inhibit ubiquitination. In terms of biological role, post-transcriptional repressor of mRNAs containing a conserved stem loop motif, called constitutive decay element (CDE), which is often located in the 3'-UTR, as in HMGXB3, ICOS, IER3, NFKBID, NFKBIZ, PPP1R10, TNF and in many more mRNAs. Binds to CDE and promotes mRNA deadenylation and degradation. This process does not involve miRNAs. In follicular helper T (Tfh) cells, represses of ICOS and TNFRSF4 expression, thus preventing spontaneous Tfh cell differentiation, germinal center B-cell differentiation in the absence of immunization and autoimmunity. In resting or LPS-stimulated macrophages, controls inflammation by suppressing TNF expression. Also recognizes CDE in its own mRNA and in that of paralogous RC3H1, possibly leading to feedback loop regulation. Inhibits cooperatively with ZC3H12A the differentiation of helper T cells Th17 in lungs. They repress target mRNA encoding the Th17 cell-promoting factors IL6, ICOS, REL, IRF4, NFKBID and NFKBIZ. The cooperation requires RNA-binding by RC3H1 and the nuclease activity of ZC3H12A. miRNA-binding protein that regulates microRNA homeostasis. Enhances DICER-mediated processing of pre-MIR146a but reduces mature MIR146a levels through an increase of 3' end uridylation. Both inhibits ICOS mRNA expression and they may act together to exert the suppression. Acts as a ubiquitin E3 ligase. Pairs with E2 enzymes UBE2B, UBE2D2, UBE2E2, UBE2E3, UBE2G2, UBE2K and UBE2Q2 and produces polyubiquitin chains. Shows the strongest activity when paired with UBE2N:UBE2V1 or UBE2N:UBE2V2 E2 complexes and generate both short and long polyubiquitin chains. Involved in the ubiquitination of MAP3K5. Able to interact with double-stranded RNA (dsRNA). This chain is Roquin-2 (Rc3h2), found in Mus musculus (Mouse).